Reading from the N-terminus, the 149-residue chain is Endoribonuclease YbeY (149 aa).

Zn(2+)-binding residues include His113, His117, and His123.

It belongs to the endoribonuclease YbeY family. Zn(2+) serves as cofactor.

The protein resides in the cytoplasm. Functionally, single strand-specific metallo-endoribonuclease involved in late-stage 70S ribosome quality control and in maturation of the 3' terminus of the 16S rRNA. In Saccharophagus degradans (strain 2-40 / ATCC 43961 / DSM 17024), this protein is Endoribonuclease YbeY.